The sequence spans 147 residues: HTH-type transcriptional regulator MntR (147 aa).

An HTH dtxR-type domain is found at 1 to 63 (MPTPSMEDYI…YEKYRGFVLT (63 aa)). 6 residues coordinate Mn(2+): Asp-8, Glu-11, His-77, Glu-99, Glu-102, and His-103.

The protein belongs to the DtxR/MntR family. As to quaternary structure, homodimer.

The protein localises to the cytoplasm. With respect to regulation, DNA binding is strongly activated by Mn(2+). Central regulator of manganese homeostasis. This Oceanobacillus iheyensis (strain DSM 14371 / CIP 107618 / JCM 11309 / KCTC 3954 / HTE831) protein is HTH-type transcriptional regulator MntR.